Consider the following 337-residue polypeptide: F420-dependent glucose-6-phosphate dehydrogenase (337 aa).

Aspartate 44 is a binding site for coenzyme F420-(gamma-Glu)n. Catalysis depends on histidine 45, which acts as the Proton donor. Coenzyme F420-(gamma-Glu)n is bound by residues threonine 81 and 112–113; that span reads TG. The active-site Proton acceptor is glutamate 114. Residues asparagine 117, 180-181, and 183-184 each bind coenzyme F420-(gamma-Glu)n; these read GG and GV. Substrate is bound by residues threonine 198, lysine 201, lysine 262, and arginine 286.

Belongs to the F420-dependent glucose-6-phosphate dehydrogenase family. Homodimer.

It catalyses the reaction oxidized coenzyme F420-(gamma-L-Glu)(n) + D-glucose 6-phosphate + H(+) = 6-phospho-D-glucono-1,5-lactone + reduced coenzyme F420-(gamma-L-Glu)(n). Catalyzes the coenzyme F420-dependent oxidation of glucose 6-phosphate (G6P) to 6-phosphogluconolactone. In Kineococcus radiotolerans (strain ATCC BAA-149 / DSM 14245 / SRS30216), this protein is F420-dependent glucose-6-phosphate dehydrogenase.